Reading from the N-terminus, the 626-residue chain is Chaperone protein HtpG (626 aa).

Residues 1–341 (METKQFKAES…SEDLSLNISR (341 aa)) form an a; substrate-binding region. The tract at residues 342–552 (EILQHDRQLK…EGELSIEMEK (211 aa)) is b. Positions 490 to 509 (DLGIEGEEKENTSNSDDKEN) are disordered. Over residues 498–509 (KENTSNSDDKEN) the composition is skewed to basic and acidic residues. The interval 553–626 (VLNAMPNNQN…FTNNICKIMK (74 aa)) is c.

Belongs to the heat shock protein 90 family. In terms of assembly, homodimer.

Its subcellular location is the cytoplasm. Its function is as follows. Molecular chaperone. Has ATPase activity. The protein is Chaperone protein HtpG of Clostridium botulinum (strain ATCC 19397 / Type A).